The sequence spans 1476 residues: ABC-type transporter FG02316 (1476 aa).

A glycan (N-linked (GlcNAc...) asparagine) is linked at Asn2. Transmembrane regions (helical) follow at residues 23 to 43, 64 to 84, 97 to 117, 156 to 176, 266 to 286, 305 to 325, 384 to 404, 407 to 427, 485 to 505, and 532 to 552; these read FTLL…LLLA, WLYC…AFLV, SLPA…LSYV, AAIT…AETI, ILFI…QPFL, QGYG…VTTG, VWAN…QLGL, LIPV…VSFV, LLIW…VLSF, and LFAL…SFMG. The region spanning 274 to 552 is the ABC transmembrane type-1 1 domain; the sequence is LCFIGFTFCQ…FVTSLSSFMG (279 aa). The interval 586–615 is disordered; sequence ISGVSSSEEKHPVSPIQESMMKTEPSGDSP. Residues 622–847 form the ABC transporter 1 domain; the sequence is IRNASFGYDR…SDNYVSHSDV (226 aa). Asn624 carries an N-linked (GlcNAc...) asparagine glycan. Position 654–661 (654–661) interacts with ATP; it reads GPVGSGKS. Asn682, Asn696, Asn798, and Asn836 each carry an N-linked (GlcNAc...) asparagine glycan. A disordered region spans residues 842 to 870; that stretch reads VSHSDVSSPDGARSKAPSSGPASSSAPVP. A compositionally biased stretch (low complexity) spans 855–870; that stretch reads SKAPSSGPASSSAPVP. Transmembrane regions (helical) follow at residues 906–926, 950–970, 1021–1041, 1045–1065, 1137–1157, and 1167–1187; these read MNAI…AYIF, LGYY…FLVL, LIDM…VLCI, ILIA…LATL, WLTL…VVLV, and GLIG…KLLM. The ABC transmembrane type-1 2 domain maps to 916 to 1195; the sequence is VFVLAICAYI…LMTFWTTLET (280 aa). An ABC transporter 2 domain is found at 1232–1464; sequence ILFDQVSAGY…GPDASTFASM (233 aa). Asn1250 carries N-linked (GlcNAc...) asparagine glycosylation. Residue 1265 to 1272 coordinates ATP; that stretch reads GRTGSGKS. Asn1414 carries N-linked (GlcNAc...) asparagine glycosylation.

It belongs to the ABC transporter superfamily. ABCC family. Conjugate transporter (TC 3.A.1.208) subfamily.

The protein resides in the cell membrane. In terms of biological role, ABC-type transporter; part of the gene cluster that mediates the biosynthesis of the fusahexin, a cyclic hydrophobic hexapeptide with the amino acid sequence cyclo-(D-Ala-L-Leu-D-allo-Thr-L-Pro-D-Leu-L-Leu) that plays an important role in cell surface hydrophobicity. This is ABC-type transporter FG02316 from Gibberella zeae (strain ATCC MYA-4620 / CBS 123657 / FGSC 9075 / NRRL 31084 / PH-1) (Wheat head blight fungus).